A 193-amino-acid chain; its full sequence is Ion-translocating oxidoreductase complex subunit A (193 aa).

The next 6 membrane-spanning stretches (helical) occupy residues 5-25, 47-67, 72-92, 102-122, 134-154, and 171-191; these read LLLF…FLGL, FVMT…LIPL, LRTL…EMVV, LLGI…VALL, ALYG…FAAI, and AIAL…SGLV.

The protein belongs to the NqrDE/RnfAE family. In terms of assembly, the complex is composed of six subunits: RsxA, RsxB, RsxC, RsxD, RsxE and RsxG.

It is found in the cell inner membrane. Functionally, part of a membrane-bound complex that couples electron transfer with translocation of ions across the membrane. Required to maintain the reduced state of SoxR. The protein is Ion-translocating oxidoreductase complex subunit A of Salmonella arizonae (strain ATCC BAA-731 / CDC346-86 / RSK2980).